The following is a 471-amino-acid chain: 5-hydroxytryptamine receptor 2A (471 aa).

At 1–80 (MEILCEDNIS…LQEKNWSALL (80 aa)) the chain is on the extracellular side. 5 N-linked (GlcNAc...) asparagine glycosylation sites follow: N8, N38, N44, N51, and N54. A helical membrane pass occupies residues 81 to 97 (TTVVIILTIAGNILVIM). Topologically, residues 98–111 (AVSLEKKLQNATNY) are cytoplasmic. The helical transmembrane segment at 112–137 (FLMSLAIADMLLGFLVMPVSMLTILY) threads the bilayer. The Extracellular portion of the chain corresponds to 138–146 (GYRWPLPSK). The helical transmembrane segment at 147–171 (LCAIWIYLDVLFSTASIMHLCAISL) threads the bilayer. An intrachain disulfide couples C148 to C227. D155 is a serotonin binding site. Residues 172-174 (DRY) carry the DRY motif; important for ligand-induced conformation changes motif. Residues 172–191 (DRYVAIQNPIHHSRFNSRTK) are Cytoplasmic-facing. Residues 192 to 215 (AFLKIIAVWTISVGISMPIPVFGL) traverse the membrane as a helical segment. At 216 to 232 (QDDSKVFKEGSCLLADD) the chain is on the extracellular side. A helical membrane pass occupies residues 233–258 (NFVLIGSFVAFFIPLTIMVITYFLTI). The Cytoplasmic portion of the chain corresponds to 259-322 (KSLQKEATLC…QSISNEQKAC (64 aa)). At S280 the chain carries Phosphoserine. A helical membrane pass occupies residues 323-348 (KVLGIVFFLFVVMWCPFFITNIMAVI). N343 contributes to the serotonin binding site. C349 and C353 are oxidised to a cystine. The Extracellular segment spans residues 349 to 356 (CKESCNEN). The chain crosses the membrane as a helical span at residues 357-382 (VIGALLNVFVWIGYLSSAVNPLVYTL). An NPxxY motif; important for ligand-induced conformation changes and signaling motif is present at residues 376-380 (NPLVY). The Cytoplasmic segment spans residues 383 to 471 (FNKTYRSAFS…ETVNEKVSCV (89 aa)). A PDZ-binding motif is present at residues 469-471 (SCV).

Belongs to the G-protein coupled receptor 1 family. As to quaternary structure, interacts (via C-terminus) with MPDZ and PATJ. May interact (via C-terminus) with MPP3, PRDX6, DLG4, DLG1, CASK, APBA1 and MAGI2. Interacts with GRM2 and DRD2; this may affect signaling. Detected in adult intestine, especially in mucosal epithelium, longitudinal and circular layers of muscularis externa and myenteric plexuses. Highly expressed in Paneth cells, and detected at lower levels in enterocytes (at protein level). Detected in brain cortex.

It localises to the cell membrane. The protein resides in the cell projection. The protein localises to the axon. It is found in the cytoplasmic vesicle. Its subcellular location is the membrane. It localises to the caveola. The protein resides in the dendrite. The protein localises to the presynapse. Its activity is regulated as follows. G-protein coupled receptor activity is regulated by lipids: oleamide increases HTR2A-mediated activity. Functionally, G-protein coupled receptor for 5-hydroxytryptamine (serotonin). Also functions as a receptor for various drugs and psychoactive substances, including mescaline, psilocybin, 1-(2,5-dimethoxy-4-iodophenyl)-2-aminopropane (DOI) and lysergic acid diethylamide (LSD). Ligand binding causes a conformation change that triggers signaling via guanine nucleotide-binding proteins (G proteins) and modulates the activity of downstream effectors. HTR2A is coupled to G(q)/G(11) G alpha proteins and activates phospholipase C-beta, releasing diacylglycerol (DAG) and inositol 1,4,5-trisphosphate (IP3) second messengers that modulate the activity of phosphatidylinositol 3-kinase and promote the release of Ca(2+) ions from intracellular stores, respectively. Beta-arrestin family members inhibit signaling via G proteins and mediate activation of alternative signaling pathways. Affects neural activity, perception, cognition and mood. Plays a role in the regulation of behavior, including responses to anxiogenic situations and psychoactive substances. Plays a role in intestinal smooth muscle contraction, and may play a role in arterial vasoconstriction. The polypeptide is 5-hydroxytryptamine receptor 2A (Htr2a) (Rattus norvegicus (Rat)).